We begin with the raw amino-acid sequence, 246 residues long: MDSEHWISSLAAAKRFYAAQLGHVDDMAGIGMEEVEMEMEDDGEGMELELEMQLEEATWPDVACPYCYEDHDIASLCAHLEEDHPYEPHTSPCPICFEKITRDMLNHITMQHGYLFKSGRRMRRFDIPESQALSLLSRDLRDAQLQALLGGGHRQRRSNTTATNISADPLLSSFGLGFSTLDSEERSKAPVPIPDDTSIHKDTPAQPWESRIDSSLTSEEREQKRKQATDRATFVQGLVLSTLFED.

Positions 185 to 230 (ERSKAPVPIPDDTSIHKDTPAQPWESRIDSSLTSEEREQKRKQATD) are disordered. The span at 218–229 (SEEREQKRKQAT) shows a compositional bias: basic and acidic residues.

The protein belongs to the Di19 family.

The protein is Protein DEHYDRATION-INDUCED 19 homolog 3 (DI19-3) of Oryza sativa subsp. japonica (Rice).